A 546-amino-acid polypeptide reads, in one-letter code: DNA replication factor Cdt1 (546 aa).

Residues 1–11 (MEQRRVTDFFA) show a composition bias toward basic and acidic residues. Positions 1 to 23 (MEQRRVTDFFARRRPGPPRIAPP) match the PIP-box K+4 motif motif. Disordered stretches follow at residues 1 to 118 (MEQR…QDQD) and 143 to 165 (SAQD…PCGE). Low complexity predominate over residues 28–45 (RTPSPARPALRAPASATS). Residue Thr29 is modified to Phosphothreonine; by MAPK8. Ser31 bears the Phosphoserine mark. The Cyclin-binding motif signature appears at 68 to 70 (RRL). The residue at position 93 (Ser93) is a Phosphoserine; by MAPK8. The interaction with GMNN stretch occupies residues 150-190 (SCTPEAEGRPEEPCGEKAPAYQRFHALAQPGLPGLVLPYKY). A compositionally biased stretch (basic and acidic residues) spans 155–164 (AEGRPEEPCG). The residue at position 318 (Ser318) is a Phosphoserine; by MAPK8. Phosphoserine is present on residues Ser380 and Ser394. Residues 383-415 (ALRSAAPSSPGSPRPALPATPPATPPAASPSAL) form a disordered region. Residues 392-410 (PGSPRPALPATPPATPPAA) show a composition bias toward pro residues. The interaction with LRWD1 stretch occupies residues 451-546 (LERLPELARV…AHQTRAEEGL (96 aa)).

This sequence belongs to the Cdt1 family. In terms of assembly, interacts with GMNN; the interaction inhibits binding of the MCM complex to origins of replication. Interacts with MCM6. Interacts with CDC6; are mutually dependent on one another for loading MCM complexes onto chromatin. Interacts with PCNA. Interacts with LRWD1 during G1 phase and during mitosis. Interacts with NDC80 subunit of the NDC80 complex; leading to kinetochore localization. Interacts with GRWD1; origin binding of GRWD1 is dependent on CDT1. Interacts with KAT7. Interacts with ubiquitin-binding protein FAF1; the interaction is likely to promote CDT1 degradation. Post-translationally, two independent E3 ubiquitin ligase complexes, SCF(SKP2) and the DCX(DTL) complex, mediated CDT1 degradation in S phase. Ubiquitinated by the DCX(DTL) complex, in response to DNA damage, leading to its degradation. Ubiquitination by the DCX(DTL) complex is necessary to ensure proper cell cycle regulation and is PCNA-dependent: interacts with PCNA via its PIP-box, while the presence of the containing the 'K+4' motif in the PIP box, recruit the DCX(DTL) complex, leading to its degradation. Phosphorylation at Thr-29 by CDK2 targets CDT1 for ubiquitination by SCF(SKP2) E3 ubiquitin ligase and subsequent degradation. The interaction with GMNN protects it against ubiquitination. Deubiquitinated by USP37. Ubiquitinated and degraded by the SCF(FBXO31) complex during the G2 phase to prevent re-replication. Phosphorylation by cyclin A-dependent kinases at Thr-29 targets CDT1 for ubiquitynation by SCF(SKP2) E3 ubiquitin ligase and subsequent degradation. Phosphorylated at Thr-29 by MAPK8/JNK1, which blocks replication licensing in response to stress. Binding to GMNN is not affected by phosphorylation.

The protein resides in the nucleus. It localises to the chromosome. It is found in the centromere. The protein localises to the kinetochore. Its function is as follows. Required for both DNA replication and mitosis. DNA replication licensing factor, required for pre-replication complex assembly. Cooperates with CDC6 and the origin recognition complex (ORC) during G1 phase of the cell cycle to promote the loading of the mini-chromosome maintenance (MCM) complex onto DNA to generate pre-replication complexes (pre-RC). Required also for mitosis by promoting stable kinetochore-microtubule attachments. Potential oncogene. The protein is DNA replication factor Cdt1 of Homo sapiens (Human).